Reading from the N-terminus, the 719-residue chain is Fatty acid oxidation complex subunit alpha (719 aa).

The tract at residues 1-190 (MIYQGNRITV…KLGLVDAVVA (190 aa)) is enoyl-CoA hydratase/isomerase. Aspartate 298 provides a ligand contact to substrate. The tract at residues 313–719 (HDINEAAVLG…AAGETFYPKA (407 aa)) is 3-hydroxyacyl-CoA dehydrogenase. Residues methionine 326, aspartate 345, 402-404 (VVE), lysine 409, and serine 431 contribute to the NAD(+) site. Histidine 452 serves as the catalytic For 3-hydroxyacyl-CoA dehydrogenase activity. Asparagine 455 serves as a coordination point for NAD(+). Position 502 (asparagine 502) interacts with substrate.

It in the N-terminal section; belongs to the enoyl-CoA hydratase/isomerase family. This sequence in the C-terminal section; belongs to the 3-hydroxyacyl-CoA dehydrogenase family. Heterotetramer of two alpha chains (FadB) and two beta chains (FadA).

It catalyses the reaction a (3S)-3-hydroxyacyl-CoA + NAD(+) = a 3-oxoacyl-CoA + NADH + H(+). The catalysed reaction is a (3S)-3-hydroxyacyl-CoA = a (2E)-enoyl-CoA + H2O. The enzyme catalyses a 4-saturated-(3S)-3-hydroxyacyl-CoA = a (3E)-enoyl-CoA + H2O. It carries out the reaction (3S)-3-hydroxybutanoyl-CoA = (3R)-3-hydroxybutanoyl-CoA. It catalyses the reaction a (3Z)-enoyl-CoA = a 4-saturated (2E)-enoyl-CoA. The catalysed reaction is a (3E)-enoyl-CoA = a 4-saturated (2E)-enoyl-CoA. The protein operates within lipid metabolism; fatty acid beta-oxidation. Involved in the aerobic and anaerobic degradation of long-chain fatty acids via beta-oxidation cycle. Catalyzes the formation of 3-oxoacyl-CoA from enoyl-CoA via L-3-hydroxyacyl-CoA. It can also use D-3-hydroxyacyl-CoA and cis-3-enoyl-CoA as substrate. The sequence is that of Fatty acid oxidation complex subunit alpha from Psychrobacter sp. (strain PRwf-1).